A 273-amino-acid chain; its full sequence is ATP synthase subunit delta (273 aa).

The tract at residues 55 to 78 (TDPAQSARPRPSSPSVSSAPRSAA) is disordered. Positions 57–78 (PAQSARPRPSSPSVSSAPRSAA) are enriched in low complexity.

This sequence belongs to the ATPase delta chain family. In terms of assembly, F-type ATPases have 2 components, F(1) - the catalytic core - and F(0) - the membrane proton channel. F(1) has five subunits: alpha(3), beta(3), gamma(1), delta(1), epsilon(1). F(0) has three main subunits: a(1), b(2) and c(10-14). The alpha and beta chains form an alternating ring which encloses part of the gamma chain. F(1) is attached to F(0) by a central stalk formed by the gamma and epsilon chains, while a peripheral stalk is formed by the delta and b chains.

Its subcellular location is the cell membrane. Its function is as follows. F(1)F(0) ATP synthase produces ATP from ADP in the presence of a proton or sodium gradient. F-type ATPases consist of two structural domains, F(1) containing the extramembraneous catalytic core and F(0) containing the membrane proton channel, linked together by a central stalk and a peripheral stalk. During catalysis, ATP synthesis in the catalytic domain of F(1) is coupled via a rotary mechanism of the central stalk subunits to proton translocation. In terms of biological role, this protein is part of the stalk that links CF(0) to CF(1). It either transmits conformational changes from CF(0) to CF(1) or is implicated in proton conduction. This chain is ATP synthase subunit delta, found in Streptomyces lividans.